The primary structure comprises 417 residues: Bifunctional thiamine biosynthesis protein ThiDN (417 aa).

A hydroxymethylpyrimidine/phosphomethylpyrimidine kinase region spans residues 1-235 (MVILAIGGYD…KSKFGYNSNP (235 aa)). Gln41 is a binding site for 4-amino-5-hydroxymethyl-2-methylpyrimidine. The segment at 236 to 417 (TYINKEKVIK…VIQKIYNTLM (182 aa)) is thiamine-phosphate synthase.

This sequence in the N-terminal section; belongs to the ThiD family. The protein in the C-terminal section; belongs to the ThiN family.

It carries out the reaction 4-amino-5-hydroxymethyl-2-methylpyrimidine + ATP = 4-amino-2-methyl-5-(phosphooxymethyl)pyrimidine + ADP + H(+). The catalysed reaction is 4-amino-2-methyl-5-(phosphooxymethyl)pyrimidine + ATP = 4-amino-2-methyl-5-(diphosphooxymethyl)pyrimidine + ADP. The enzyme catalyses 2-[(2R,5Z)-2-carboxy-4-methylthiazol-5(2H)-ylidene]ethyl phosphate + 4-amino-2-methyl-5-(diphosphooxymethyl)pyrimidine + 2 H(+) = thiamine phosphate + CO2 + diphosphate. It catalyses the reaction 2-(2-carboxy-4-methylthiazol-5-yl)ethyl phosphate + 4-amino-2-methyl-5-(diphosphooxymethyl)pyrimidine + 2 H(+) = thiamine phosphate + CO2 + diphosphate. It carries out the reaction 4-methyl-5-(2-phosphooxyethyl)-thiazole + 4-amino-2-methyl-5-(diphosphooxymethyl)pyrimidine + H(+) = thiamine phosphate + diphosphate. It functions in the pathway cofactor biosynthesis; thiamine diphosphate biosynthesis; 4-amino-2-methyl-5-diphosphomethylpyrimidine from 5-amino-1-(5-phospho-D-ribosyl)imidazole. Its pathway is cofactor biosynthesis; thiamine diphosphate biosynthesis; thiamine phosphate from 4-amino-2-methyl-5-diphosphomethylpyrimidine and 4-methyl-5-(2-phosphoethyl)-thiazole: step 1/1. Its function is as follows. Catalyzes the phosphorylation of hydroxymethylpyrimidine phosphate (HMP-P) to HMP-PP, and of HMP to HMP-P. Functionally, condenses 4-methyl-5-(beta-hydroxyethyl)thiazole monophosphate (THZ-P) and 4-amino-5-hydroxymethyl pyrimidine pyrophosphate (HMP-PP) to form thiamine monophosphate (TMP). The protein is Bifunctional thiamine biosynthesis protein ThiDN (thiDN) of Methanocaldococcus jannaschii (strain ATCC 43067 / DSM 2661 / JAL-1 / JCM 10045 / NBRC 100440) (Methanococcus jannaschii).